A 162-amino-acid polypeptide reads, in one-letter code: UPF0262 protein HNE_1347 (162 aa).

The protein belongs to the UPF0262 family.

The chain is UPF0262 protein HNE_1347 from Hyphomonas neptunium (strain ATCC 15444).